Reading from the N-terminus, the 286-residue chain is MVKKIHFVMERHASIVAFLLAVLALTESQAFTSVKLPRDEHWPYNYVSVGPAGVWAVNRQNKLFYRTGTYGDNANMGSGWQFKQDGVGQVDVGKDKVGYINLSGGSLFRIEGISQANPVGGTPKSWEWWTKYIGMSLREDTRFSSRIENQNKVLTFTFRTCFWASRITNWCFADSSYTETVTAGGSGTWITKSQLKYKSGTFGNPDTEGGDWILVDSGSFQHVSSGSGVVLAVRSNGELVQRTGITCSLPQGTGWTSMLNSMSRVDTYGTVAWAVDTAGDLYFINL.

An N-terminal signal peptide occupies residues 1–30; that stretch reads MVKKIHFVMERHASIVAFLLAVLALTESQA. Asn-101 carries an N-linked (GlcNAc...) asparagine glycan.

The protein belongs to the tectonin family. As to quaternary structure, perivitellin-2 is a dimer of heterodimers held together head-to-tail by non-covalent forces. The heterodimer is composed of the tachylectin subunit (31 kDa) and the MACPF subunit (67 kDa) that are disulfide-linked. In terms of processing, PV2 is a very high density lipoprotein (VHDL). It contains 3.75% of lipids. The major lipid classes are free sterols and phospholipids and also have significant quantities of energy-providing triacylglycerides and free fatty acids. Produced by albumen secretory cells. Found in developing eggs.

It localises to the secreted. The protein resides in the target cell membrane. Its function is as follows. The egg defensive protein perivitellin-2 is a pore-forming two-subunit glycoprotein that affects both the nervous and digestive systems of mammals. In addition, it is a source of both structural and energetic molecules during embryonic development. The tachylectin subunit (31 kDa) binds target membranes while the MACPF subunit (67 kDa) disrupts lipid bilayers forming large pores (inner diameter of about 5.6 nm) altering the plasma membrance conductance. Both in vivo and in vitro, the protein shows wide pH range stability and is resistant to enzymatic proteolysis from gastrointestinal environments. It is cytotoxic to both epithelial and immune cells from the digestive system of mammals. It induces enterocyte death by a lytic mechanism and disrupts enterocyte monolayers in a dose-dependent manner. After oral administration to mice, it binds enterocytes and induces large dose-dependent morphological changes on their small intestine mucosa, reducing the absorptive surface. Additionally, it is detected in the Peyer's patches where it activates lymphoid follicles and triggers apoptosis. The toxin can also traverse the intestinal barrier and induce oral adaptive immunity with evidence of circulating antibody response. The toxin also shows hemagglutination properties thanks to the tachylectin subunit, but has no hemolytic activity. In addition to enterotoxin activity, the toxin also acts as a neurotoxin, since an intraperitoneal injection can induce paralysis of the mice rear limbs, followed by death. This chain is Perivitellin-2 31 kDa subunit, found in Pomacea maculata (Giant applesnail).